We begin with the raw amino-acid sequence, 750 residues long: Photosystem I P700 chlorophyll a apoprotein A1 (750 aa).

8 helical membrane passes run 70 to 93 (VFSAHFGQLSIIFLWLSGMYFHGA), 156 to 179 (LYCTAIGALVFAALMLFAGWFHYH), 195 to 219 (LNHHLAGLLGLGSLSWAGHQVHVSL), 291 to 309 (IAHHHLAIAILFLIAGHMY), 346 to 369 (WHAQLSLNLAMLGSLTIVVAHHMY), 385 to 411 (LSLFTHHMWIGGFLIVGAAAHAAIFMV), 433 to 455 (AIISHLNWACIFLGFHSFGLYIH), and 531 to 549 (FLVHHIHAFTIHVTVLILL). Cys573 and Cys582 together coordinate [4Fe-4S] cluster. Helical transmembrane passes span 589 to 610 (HVFLGLFWMYNAISVVIFHFSW) and 664 to 686 (LSAYGLFFLGAHFVWAFSLMFLF). His675 serves as a coordination point for chlorophyll a'. Positions 683 and 691 each coordinate chlorophyll a. Residue Trp692 participates in phylloquinone binding. The helical transmembrane segment at 724-744 (AVGVTHYLLGGIATTWAFFLA) threads the bilayer.

This sequence belongs to the PsaA/PsaB family. In terms of assembly, the PsaA/B heterodimer binds the P700 chlorophyll special pair and subsequent electron acceptors. PSI consists of a core antenna complex that captures photons, and an electron transfer chain that converts photonic excitation into a charge separation. The eukaryotic PSI reaction center is composed of at least 11 subunits. P700 is a chlorophyll a/chlorophyll a' dimer, A0 is one or more chlorophyll a, A1 is one or both phylloquinones and FX is a shared 4Fe-4S iron-sulfur center. serves as cofactor.

It localises to the plastid. It is found in the chloroplast thylakoid membrane. The enzyme catalyses reduced [plastocyanin] + hnu + oxidized [2Fe-2S]-[ferredoxin] = oxidized [plastocyanin] + reduced [2Fe-2S]-[ferredoxin]. Functionally, psaA and PsaB bind P700, the primary electron donor of photosystem I (PSI), as well as the electron acceptors A0, A1 and FX. PSI is a plastocyanin-ferredoxin oxidoreductase, converting photonic excitation into a charge separation, which transfers an electron from the donor P700 chlorophyll pair to the spectroscopically characterized acceptors A0, A1, FX, FA and FB in turn. Oxidized P700 is reduced on the lumenal side of the thylakoid membrane by plastocyanin. In Atropa belladonna (Belladonna), this protein is Photosystem I P700 chlorophyll a apoprotein A1.